A 194-amino-acid polypeptide reads, in one-letter code: Inosine triphosphate pyrophosphatase (194 aa).

An ITP-binding site is contributed by T10–K15. Mg(2+) is bound at residue E37. ITP is bound by residues K49, D65–V66, K82, F142–D145, K166, and H171–R172.

This sequence belongs to the HAM1 NTPase family. Homodimer. Requires Mg(2+) as cofactor. It depends on Mn(2+) as a cofactor.

Its subcellular location is the cytoplasm. The enzyme catalyses ITP + H2O = IMP + diphosphate + H(+). It catalyses the reaction dITP + H2O = dIMP + diphosphate + H(+). The catalysed reaction is XTP + H2O = XMP + diphosphate + H(+). In terms of biological role, pyrophosphatase that hydrolyzes non-canonical purine nucleotides such as inosine triphosphate (ITP), deoxyinosine triphosphate (dITP) or xanthosine 5'-triphosphate (XTP) to their respective monophosphate derivatives. The enzyme does not distinguish between the deoxy- and ribose forms. Probably excludes non-canonical purines from RNA and DNA precursor pools, thus preventing their incorporation into RNA and DNA and avoiding chromosomal lesions. The sequence is that of Inosine triphosphate pyrophosphatase from Giardia intestinalis (strain ATCC 50803 / WB clone C6) (Giardia lamblia).